A 181-amino-acid chain; its full sequence is uncharacterized protein (181 aa).

This is an uncharacterized protein from Borreliella burgdorferi (strain ATCC 35210 / DSM 4680 / CIP 102532 / B31) (Borrelia burgdorferi).